The chain runs to 134 residues: ATP synthase epsilon chain (134 aa).

The protein belongs to the ATPase epsilon chain family. In terms of assembly, F-type ATPases have 2 components, CF(1) - the catalytic core - and CF(0) - the membrane proton channel. CF(1) has five subunits: alpha(3), beta(3), gamma(1), delta(1), epsilon(1). CF(0) has three main subunits: a, b and c.

It localises to the cell inner membrane. Functionally, produces ATP from ADP in the presence of a proton gradient across the membrane. This chain is ATP synthase epsilon chain, found in Syntrophobacter fumaroxidans (strain DSM 10017 / MPOB).